Consider the following 661-residue polypeptide: PAN2-PAN3 deadenylation complex subunit pan3 (661 aa).

Disordered stretches follow at residues 1–29 and 53–131; these read MASV…NAKD and DPHK…RQDA. The C3H1-type zinc-finger motif lies at 26–55; sequence NAKDTLCRNVTIYGRCRYEDKGCAFNHDPH. The PABPC-interacting motif-2 (PAM-2) signature appears at 63–83; sequence NASKKRFNVDSPSFTPSLLPS. Positions 77–104 are enriched in low complexity; that stretch reads TPSLLPSNGSSPTSSSSSLKKSSTISPK. Polar residues predominate over residues 115–126; sequence TAASRSNTSTPG. Residues 263–524 are pseudokinase domain; it reads QTLPNTQLPA…NIDILINGIS (262 aa). ATP is bound by residues R315, 364-371, and 424-425; these read DYHPLSKT and SK. Positions 525 to 563 form a coiled coil; that stretch reads SQLMSTFDSALHLDDQLTSDLGRELENGRLVRLLTKLNF. Positions 564 to 661 are knob domain; sequence INERPEHEHD…ALLRPSRRPH (98 aa).

It belongs to the protein kinase superfamily. PAN3 family. In terms of assembly, homodimer. Forms a heterotrimer with a catalytic subunit pan2 to form the poly(a)-nuclease (PAN) deadenylation complex. Interacts (via PAM-2 motif) with poly(A)-binding protein pab1 (via PABC domain), conferring substrate specificity of the enzyme complex.

The protein localises to the cytoplasm. Its function is as follows. Regulatory subunit of the poly(A)-nuclease (PAN) deadenylation complex, one of two cytoplasmic mRNA deadenylases involved in mRNA turnover. PAN specifically shortens poly(A) tails of RNA and the activity is stimulated by poly(A)-binding protein pab1. PAN deadenylation is followed by rapid degradation of the shortened mRNA tails by the CCR4-NOT complex. Deadenylated mRNAs are then degraded by two alternative mechanisms, namely exosome-mediated 3'-5' exonucleolytic degradation, or deadenylation-dependent mRNA decaping and subsequent 5'-3' exonucleolytic degradation by XRN1. May also be involved in post-transcriptional maturation of mRNA poly(A) tails. pan3 acts as a positive regulator for PAN activity, recruiting the catalytic subunit pan2 to mRNA via its interaction with RNA and with pab1. The polypeptide is PAN2-PAN3 deadenylation complex subunit pan3 (Emericella nidulans (strain FGSC A4 / ATCC 38163 / CBS 112.46 / NRRL 194 / M139) (Aspergillus nidulans)).